The following is a 658-amino-acid chain: Glycogen debranching enzyme (658 aa).

Catalysis depends on aspartate 336, which acts as the Nucleophile. The Proton donor role is filled by glutamate 371. The interval 459-483 (EANGEENRDGTNSNYSDNHGKEGLG) is disordered.

The protein belongs to the glycosyl hydrolase 13 family.

The enzyme catalyses Hydrolysis of (1-&gt;6)-alpha-D-glucosidic linkages to branches with degrees of polymerization of three or four glucose residues in limit dextrin.. It functions in the pathway glycan degradation; glycogen degradation. Functionally, removes maltotriose and maltotetraose chains that are attached by 1,6-alpha-linkage to the limit dextrin main chain, generating a debranched limit dextrin. The chain is Glycogen debranching enzyme from Salmonella agona (strain SL483).